The primary structure comprises 353 residues: UDP-3-O-acylglucosamine N-acyltransferase (353 aa).

His242 (proton acceptor) is an active-site residue.

The protein belongs to the transferase hexapeptide repeat family. LpxD subfamily. In terms of assembly, homotrimer.

It catalyses the reaction a UDP-3-O-[(3R)-3-hydroxyacyl]-alpha-D-glucosamine + a (3R)-hydroxyacyl-[ACP] = a UDP-2-N,3-O-bis[(3R)-3-hydroxyacyl]-alpha-D-glucosamine + holo-[ACP] + H(+). Its pathway is bacterial outer membrane biogenesis; LPS lipid A biosynthesis. Its function is as follows. Catalyzes the N-acylation of UDP-3-O-acylglucosamine using 3-hydroxyacyl-ACP as the acyl donor. Is involved in the biosynthesis of lipid A, a phosphorylated glycolipid that anchors the lipopolysaccharide to the outer membrane of the cell. The polypeptide is UDP-3-O-acylglucosamine N-acyltransferase (Pseudomonas paraeruginosa (strain DSM 24068 / PA7) (Pseudomonas aeruginosa (strain PA7))).